The following is a 251-amino-acid chain: Insulin-induced gene 1 protein (251 aa).

At 1-58 (MQTLEEHCWSCSCTRGRDKKGTRLSTWLAQRAAKAMSSLNSLLSLAYHTLASSEGRSL) the chain is on the cytoplasmic side. Residues 59–81 (IRRSLVLFAVGVFLALVLNLLQI) form a helical membrane-spanning segment. The Extracellular portion of the chain corresponds to 82–100 (QRNVTLFPEEVIATIFSSA). A helical transmembrane segment spans residues 101–118 (WWVPPCCGTAAAVVGLLY). At 119–133 (PCIDSHLGEPHKFKR) the chain is on the cytoplasmic side. The chain crosses the membrane as a helical span at residues 134-156 (EWASVMRCIAVFVGINHASAKLD). At 157–159 (FAN) the chain is on the extracellular side. The helical transmembrane segment at 160–178 (NVQLSLTLAALSLGLWWTF) threads the bilayer. The Cytoplasmic portion of the chain corresponds to 179 to 183 (DRSRS). A helical transmembrane segment spans residues 184-205 (GLGLGITIAFLATLITQFLVYN). Residues 206–219 (GVYQYTSPDFLYIR) lie on the Extracellular side of the membrane. A helical transmembrane segment spans residues 220–237 (SWLPCIFFSGGVTVGNIG). The Cytoplasmic portion of the chain corresponds to 238 to 251 (RQLAMGSSEKTHSD). Positions 245 to 251 (SEKTHSD) match the KxHxx motif.

It belongs to the INSIG family. In terms of assembly, interacts with scap; interaction is direct and only takes place in the presence of sterols; it prevents interaction between scap and the coat protein complex II (COPII). Associates with the SCAP-SREBP complex; association is mediated via its interaction with scap and only takes place in the presence of sterols.

It localises to the endoplasmic reticulum membrane. Oxysterol-binding protein that mediates feedback control of cholesterol synthesis by controlling both endoplasmic reticulum to Golgi transport of scap and degradation of hmgcr. Acts as a negative regulator of cholesterol biosynthesis by mediating the retention of the SCAP-SREBP complex in the endoplasmic reticulum, thereby blocking the processing of sterol regulatory element-binding proteins (SREBPs). Binds oxysterol, including 25-hydroxycholesterol, regulating interaction with scap and retention of the SCAP-SREBP complex in the endoplasmic reticulum. In presence of oxysterol, interacts with scap, retaining the SCAP-SREBP complex in the endoplasmic reticulum, thereby preventing scap from escorting SREBPs to the Golgi. Sterol deprivation reduces oxysterol-binding, disrupting the interaction between insig1 and scap, thereby promoting Golgi transport of the SCAP-SREBP complex, followed by processing and nuclear translocation of SREBPs. Also regulates cholesterol synthesis by regulating degradation of hmgcr. The protein is Insulin-induced gene 1 protein of Xenopus tropicalis (Western clawed frog).